Consider the following 313-residue polypeptide: tRNA dimethylallyltransferase (313 aa).

17 to 24 provides a ligand contact to ATP; sequence GPTASGKT. 19-24 is a substrate binding site; the sequence is TASGKT. Interaction with substrate tRNA stretches follow at residues 42–45, 166–170, and 247–252; these read DSAL, QRLSR, and RCVGYR.

It belongs to the IPP transferase family. As to quaternary structure, monomer. The cofactor is Mg(2+).

The catalysed reaction is adenosine(37) in tRNA + dimethylallyl diphosphate = N(6)-dimethylallyladenosine(37) in tRNA + diphosphate. Catalyzes the transfer of a dimethylallyl group onto the adenine at position 37 in tRNAs that read codons beginning with uridine, leading to the formation of N6-(dimethylallyl)adenosine (i(6)A). This Pectobacterium atrosepticum (strain SCRI 1043 / ATCC BAA-672) (Erwinia carotovora subsp. atroseptica) protein is tRNA dimethylallyltransferase.